Consider the following 197-residue polypeptide: Adrenodoxin-like protein 1, mitochondrial (197 aa).

The N-terminal 35 residues, 1–35 (MIGHRISRLGSTIVKQLAREGYLATYGTKNLHRSY), are a transit peptide targeting the mitochondrion. The 2Fe-2S ferredoxin-type domain occupies 79–184 (EKITIIFVDK…GVRLAIPSAT (106 aa)). Cys-118, Cys-124, Cys-127, and Cys-165 together coordinate [2Fe-2S] cluster.

This sequence belongs to the adrenodoxin/putidaredoxin family. [2Fe-2S] cluster serves as cofactor.

It localises to the mitochondrion matrix. In terms of biological role, associates in vitro with the adrenodoxin reductase MFDR to form an efficient low potential electron transfer chain that is able to reduce cytochrome C. Functions as accessory mitochondrial protein involved with BIO2 in the plant biotin synthase reaction. In Arabidopsis thaliana (Mouse-ear cress), this protein is Adrenodoxin-like protein 1, mitochondrial.